The sequence spans 333 residues: Uroporphyrinogen decarboxylase (333 aa).

Residues 21–25 (RQVGR), aspartate 70, tyrosine 139, serine 194, and histidine 309 contribute to the substrate site.

Belongs to the uroporphyrinogen decarboxylase family. As to quaternary structure, homodimer.

It is found in the cytoplasm. It carries out the reaction uroporphyrinogen III + 4 H(+) = coproporphyrinogen III + 4 CO2. It functions in the pathway porphyrin-containing compound metabolism; protoporphyrin-IX biosynthesis; coproporphyrinogen-III from 5-aminolevulinate: step 4/4. Its function is as follows. Catalyzes the decarboxylation of four acetate groups of uroporphyrinogen-III to yield coproporphyrinogen-III. This chain is Uroporphyrinogen decarboxylase, found in Chlamydia abortus (strain DSM 27085 / S26/3) (Chlamydophila abortus).